The primary structure comprises 253 residues: MSDVAVAADTTETPAAPTKASKATKASKATKASKATKAKTTKVPMVKADAAHPPFINMVTEAISSIKDRKGPSRAAILKYITTKYTLGDQANKINAHLRKALNKGLESNAFVQASGNGANGRFRLAEKTASVAKSPAAAKKDATGEKKATTTVAKKAATGEKKATTTVAKKAATGEKKATTTVAKKAAAGDKAKKTEVKVKKVKSPKKIAKSPVNKVTKSPVKKIAKSSSMKAAPKKAAAKPAKKAPAAAPEA.

Low complexity predominate over residues 1–33 (MSDVAVAADTTETPAAPTKASKATKASKATKAS). The interval 1–43 (MSDVAVAADTTETPAAPTKASKATKASKATKASKATKAKTTKV) is disordered. Ser2 bears the N-acetylserine mark. In terms of domain architecture, H15 spans 51–127 (AHPPFINMVT…GANGRFRLAE (77 aa)). The segment at 134-253 (KSPAAAKKDA…KKAPAAAPEA (120 aa)) is disordered. Composition is skewed to basic and acidic residues over residues 139–149 (AKKDATGEKKA) and 188–200 (AAGD…EVKV). Composition is skewed to basic residues over residues 201–210 (KKVKSPKKIA) and 234–244 (APKKAAAKPAK).

The protein belongs to the histone H1/H5 family.

Its subcellular location is the nucleus. The protein resides in the chromosome. Functionally, histones H1 are necessary for the condensation of nucleosome chains into higher-order structures. This chain is Histone H1.4 (hil-4), found in Caenorhabditis elegans.